The chain runs to 421 residues: GTPase Obg (421 aa).

The 158-residue stretch at 1 to 158 (MYFIDEAINE…FKIKTELKIL (158 aa)) folds into the Obg domain. Positions 159-324 (ADVGLIGYPS…LKYKMLEMIK (166 aa)) constitute an OBG-type G domain. GTP contacts are provided by residues 165 to 172 (GYPSVGKS), 190 to 194 (FTTLK), 211 to 214 (DLPG), 278 to 281 (NKMD), and 305 to 307 (SLL). Mg(2+) contacts are provided by serine 172 and threonine 192. The OCT domain occupies 342–421 (TLEEEKPDFV…ICDRVFEFIT (80 aa)).

It belongs to the TRAFAC class OBG-HflX-like GTPase superfamily. OBG GTPase family. In terms of assembly, monomer. Mg(2+) serves as cofactor.

The protein localises to the cytoplasm. In terms of biological role, an essential GTPase which binds GTP, GDP and possibly (p)ppGpp with moderate affinity, with high nucleotide exchange rates and a fairly low GTP hydrolysis rate. Plays a role in control of the cell cycle, stress response, ribosome biogenesis and in those bacteria that undergo differentiation, in morphogenesis control. This Phytoplasma mali (strain AT) protein is GTPase Obg.